Here is a 406-residue protein sequence, read N- to C-terminus: MKKKLVLAYSGGLDTTVIIPWLKENYDYDVIAVCVDVGQGTETDGLEEKALKTGAVKYRLVKCEDEFVTDYIYPIVKAEATYEDKYLLGTSAARPLIAKKLVEVALEEGATAIAHGATGKGNDQVRFELTVKALAPNFEIIAPWREWNISSREEEIKYLEDRNIEVPMKKDDSYSRDKNLWHLSHEGLELEDPANMPNYERLLKLSNTIENAPNEGQFVELEFEKGIPTKVDGKTFSPSDLVKYLNEIGGKHAVGIVDLLENRVVGIKCRGVYETPGGTILYAAHREIEHLCLDRETLYFKHVVSHKLTDLVYSGRWFTPLREALCAFIDSTQQTVTGKVKLKLYKGNIIPAGVTSPYSLYNQSLASFTTGELYDHHDAQGFITLFGLPLKVNALMKEQAKKMGLK.

A8–T16 serves as a coordination point for ATP. L-citrulline-binding residues include Y86 and S91. ATP is bound at residue G116. T118, N122, and D123 together coordinate L-aspartate. N122 lines the L-citrulline pocket. L-citrulline-binding residues include R126, S175, S184, E261, and Y273.

Belongs to the argininosuccinate synthase family. Type 1 subfamily. Homotetramer.

It localises to the cytoplasm. The enzyme catalyses L-citrulline + L-aspartate + ATP = 2-(N(omega)-L-arginino)succinate + AMP + diphosphate + H(+). It participates in amino-acid biosynthesis; L-arginine biosynthesis; L-arginine from L-ornithine and carbamoyl phosphate: step 2/3. The chain is Argininosuccinate synthase from Brachyspira hyodysenteriae (strain ATCC 49526 / WA1).